The chain runs to 425 residues: Enolase (425 aa).

Q163 lines the (2R)-2-phosphoglycerate pocket. E205 (proton donor) is an active-site residue. Residues D242, E285, and D312 each contribute to the Mg(2+) site. Positions 337, 366, 367, and 388 each coordinate (2R)-2-phosphoglycerate. Residue K337 is the Proton acceptor of the active site.

The protein belongs to the enolase family. It depends on Mg(2+) as a cofactor.

The protein localises to the cytoplasm. Its subcellular location is the secreted. It is found in the cell surface. It carries out the reaction (2R)-2-phosphoglycerate = phosphoenolpyruvate + H2O. It functions in the pathway carbohydrate degradation; glycolysis; pyruvate from D-glyceraldehyde 3-phosphate: step 4/5. Its function is as follows. Catalyzes the reversible conversion of 2-phosphoglycerate (2-PG) into phosphoenolpyruvate (PEP). It is essential for the degradation of carbohydrates via glycolysis. This is Enolase from Jannaschia sp. (strain CCS1).